Consider the following 264-residue polypeptide: Phycocyanobilin:ferredoxin oxidoreductase (264 aa).

Belongs to the HY2 family.

It catalyses the reaction (2R,3Z)-phycocyanobilin + 4 oxidized [2Fe-2S]-[ferredoxin] = biliverdin IXalpha + 4 reduced [2Fe-2S]-[ferredoxin] + 4 H(+). Its function is as follows. Catalyzes the four-electron reduction of biliverdin IX-alpha (2-electron reduction at both the A and D rings); the reaction proceeds via an isolatable 2-electron intermediate, 181,182-dihydrobiliverdin. The protein is Phycocyanobilin:ferredoxin oxidoreductase of Prochlorococcus marinus (strain MIT 9303).